We begin with the raw amino-acid sequence, 333 residues long: Eukaryotic translation initiation factor 3 subunit H-B (333 aa).

One can recognise an MPN domain in the interval 20-154 (IQIEGLVVMK…LKAYRLTPKL (135 aa)). The segment at 249–295 (SKQQQQKHQYVQRRQQENAQRQSRGEPPLPEEDLTKMFKPPQPPPRM) is disordered. Low complexity predominate over residues 250 to 261 (KQQQQKHQYVQR).

This sequence belongs to the eIF-3 subunit H family. In terms of assembly, component of the eukaryotic translation initiation factor 3 (eIF-3) complex, which is composed of 13 subunits: eif3a, eif3b, eif3c, eif3d, eif3e, eif3f, eif3g, eif3h, eif3i, eif3j, eif3k, eif3l and eif3m.

It localises to the cytoplasm. Functionally, component of the eukaryotic translation initiation factor 3 (eIF-3) complex, which is involved in protein synthesis of a specialized repertoire of mRNAs and, together with other initiation factors, stimulates binding of mRNA and methionyl-tRNAi to the 40S ribosome. The eIF-3 complex specifically targets and initiates translation of a subset of mRNAs involved in cell proliferation. In Danio rerio (Zebrafish), this protein is Eukaryotic translation initiation factor 3 subunit H-B (eif3hb).